A 267-amino-acid polypeptide reads, in one-letter code: 2-keto-3-deoxy-L-rhamnonate aldolase (267 aa).

The active-site Proton acceptor is His-49. Residue Gln-151 participates in substrate binding. Glu-153 contributes to the Mg(2+) binding site. Positions 178 and 179 each coordinate substrate. A Mg(2+)-binding site is contributed by Asp-179.

The protein belongs to the HpcH/HpaI aldolase family. KDR aldolase subfamily. Homohexamer. Requires Mg(2+) as cofactor.

The catalysed reaction is 2-dehydro-3-deoxy-L-rhamnonate = (S)-lactaldehyde + pyruvate. Catalyzes the reversible retro-aldol cleavage of 2-keto-3-deoxy-L-rhamnonate (KDR) to pyruvate and lactaldehyde. The chain is 2-keto-3-deoxy-L-rhamnonate aldolase from Escherichia coli O6:K15:H31 (strain 536 / UPEC).